Reading from the N-terminus, the 193-residue chain is Phosphoheptose isomerase (193 aa).

In terms of domain architecture, SIS spans 37–193 (LADSFKAGGK…QLIEKEMVKA (157 aa)). 52–54 (NGG) provides a ligand contact to substrate. The Zn(2+) site is built by histidine 61 and glutamate 65. Residues glutamate 65, 93 to 94 (ND), 119 to 121 (STS), serine 124, and glutamine 172 contribute to the substrate site. The Zn(2+) site is built by glutamine 172 and histidine 180.

The protein belongs to the SIS family. GmhA subfamily. As to quaternary structure, homotetramer. The cofactor is Zn(2+).

Its subcellular location is the cytoplasm. The enzyme catalyses 2 D-sedoheptulose 7-phosphate = D-glycero-alpha-D-manno-heptose 7-phosphate + D-glycero-beta-D-manno-heptose 7-phosphate. Its pathway is carbohydrate biosynthesis; D-glycero-D-manno-heptose 7-phosphate biosynthesis; D-glycero-alpha-D-manno-heptose 7-phosphate and D-glycero-beta-D-manno-heptose 7-phosphate from sedoheptulose 7-phosphate: step 1/1. Catalyzes the isomerization of sedoheptulose 7-phosphate in D-glycero-D-manno-heptose 7-phosphate. This is Phosphoheptose isomerase from Yersinia pseudotuberculosis serotype O:1b (strain IP 31758).